The following is a 269-amino-acid chain: Rhamnulose-1-phosphate aldolase (269 aa).

E119 is an active-site residue. Residues H142, H144, and H214 each coordinate Zn(2+).

This sequence belongs to the aldolase class II family. RhaD subfamily. Requires Zn(2+) as cofactor.

It localises to the cytoplasm. It catalyses the reaction L-rhamnulose 1-phosphate = (S)-lactaldehyde + dihydroxyacetone phosphate. It participates in carbohydrate degradation; L-rhamnose degradation; glycerone phosphate from L-rhamnose: step 3/3. In terms of biological role, catalyzes the reversible cleavage of L-rhamnulose-1-phosphate to dihydroxyacetone phosphate (DHAP) and L-lactaldehyde. This chain is Rhamnulose-1-phosphate aldolase, found in Bacteroides thetaiotaomicron (strain ATCC 29148 / DSM 2079 / JCM 5827 / CCUG 10774 / NCTC 10582 / VPI-5482 / E50).